The primary structure comprises 657 residues: Conserved oligomeric Golgi complex subunit 6 (657 aa).

This sequence belongs to the COG6 family. As to quaternary structure, component of the conserved oligomeric Golgi complex which is composed of eight different subunits and is required for normal Golgi morphology and localization.

Its subcellular location is the golgi apparatus membrane. Required for normal Golgi function. The sequence is that of Conserved oligomeric Golgi complex subunit 6 (COG6) from Homo sapiens (Human).